The sequence spans 284 residues: tRNA-cytidine(32) 2-sulfurtransferase (284 aa).

The short motif at 45–50 (SGGKDS) is the PP-loop motif element. 3 residues coordinate [4Fe-4S] cluster: Cys-120, Cys-123, and Cys-211.

The protein belongs to the TtcA family. As to quaternary structure, homodimer. It depends on Mg(2+) as a cofactor. Requires [4Fe-4S] cluster as cofactor.

Its subcellular location is the cytoplasm. The enzyme catalyses cytidine(32) in tRNA + S-sulfanyl-L-cysteinyl-[cysteine desulfurase] + AH2 + ATP = 2-thiocytidine(32) in tRNA + L-cysteinyl-[cysteine desulfurase] + A + AMP + diphosphate + H(+). The protein operates within tRNA modification. Catalyzes the ATP-dependent 2-thiolation of cytidine in position 32 of tRNA, to form 2-thiocytidine (s(2)C32). The sulfur atoms are provided by the cysteine/cysteine desulfurase (IscS) system. The polypeptide is tRNA-cytidine(32) 2-sulfurtransferase (Alcanivorax borkumensis (strain ATCC 700651 / DSM 11573 / NCIMB 13689 / SK2)).